Here is a 519-residue protein sequence, read N- to C-terminus: MNFDLKTLELAAAAAEKCDLLLVLIPEGFTPGQDALSTLAALALKNGDLLLKAGKHLQLYQVPAVAARRVILLGVGDGTARAVRQALLALGAEIKKPQTKRLVLCFAAALKAGVASAAVQAVAEASYVYTTTKSKAEARSLSRCVLGVPDAAGARPGFDCGVALVAGVEFAREWSNRPANHATPSLLADAAKTLGRLPHIQCKVHGPAQVRRLGMGAFVAVARGSEQPLRFIELRYSAAAKDQAPIVLVGKGITFDSGGISIKPAPEMDEMKFDMCGAASVLGVFRALGELQPAINVLGLIPACENLPDGRAIKPGDVVTSMSGQTIEILNTDAEGRLILCDALTYAARFKPAAVIDIATLTGACVVALAGVRSGLFANDDDLAVSLYEAGEAALDPCWRMPLDDDYADGLKSHFADMGNTAGRSGGAITAAKFLQKFVAGMRWAHLDIAGIAYKSGPAKGATGRPVGLLVHYLLAQAEAMAQQAPVAPAAPAAPAAPAARPAAKRTGRSQGGLKRTAP.

Mn(2+) contacts are provided by lysine 251 and aspartate 256. Lysine 263 is an active-site residue. Aspartate 274, aspartate 333, and glutamate 335 together coordinate Mn(2+). Residue arginine 337 is part of the active site. Residues 487 to 502 show a composition bias toward low complexity; sequence VAPAAPAAPAAPAARP. The segment at 487-519 is disordered; the sequence is VAPAAPAAPAAPAARPAAKRTGRSQGGLKRTAP.

Belongs to the peptidase M17 family. Requires Mn(2+) as cofactor.

Its subcellular location is the cytoplasm. The enzyme catalyses Release of an N-terminal amino acid, Xaa-|-Yaa-, in which Xaa is preferably Leu, but may be other amino acids including Pro although not Arg or Lys, and Yaa may be Pro. Amino acid amides and methyl esters are also readily hydrolyzed, but rates on arylamides are exceedingly low.. It catalyses the reaction Release of an N-terminal amino acid, preferentially leucine, but not glutamic or aspartic acids.. Its function is as follows. Presumably involved in the processing and regular turnover of intracellular proteins. Catalyzes the removal of unsubstituted N-terminal amino acids from various peptides. This is Probable cytosol aminopeptidase from Verminephrobacter eiseniae (strain EF01-2).